A 179-amino-acid chain; its full sequence is Laminin-binding fimbrial subunit ElfA (179 aa).

The first 21 residues, 1–21 (MKKSVLTAFITVVCATSSVMA), serve as a signal peptide directing secretion.

Belongs to the fimbrial protein family.

It is found in the fimbrium. Part of the elfADCG fimbrial operon, which could be required for adherence to host epithelial cells. ElfA is an accessory colonization factor that contributes to adherence of bacteria to human intestinal epithelial cells and to animal intestinal tissue in vitro. Binds specifically to laminin, but not to fibronectin or collagen type IV. This Escherichia coli O157:H7 protein is Laminin-binding fimbrial subunit ElfA (elfA).